The chain runs to 342 residues: UDP-3-O-(3-hydroxymyristoyl)glucosamine N-acyltransferase (342 aa).

His-239 (proton acceptor) is an active-site residue.

Belongs to the transferase hexapeptide repeat family. LpxD subfamily. Homotrimer.

The catalysed reaction is a UDP-3-O-[(3R)-3-hydroxyacyl]-alpha-D-glucosamine + a (3R)-hydroxyacyl-[ACP] = a UDP-2-N,3-O-bis[(3R)-3-hydroxyacyl]-alpha-D-glucosamine + holo-[ACP] + H(+). The enzyme catalyses UDP-3-O-[(3R)-3-hydroxytetradecanoyl]-alpha-D-glucosamine + (3R)-hydroxytetradecanoyl-[ACP] = UDP-2-N,3-O-bis[(3R)-3-hydroxytetradecanoyl]-alpha-D-glucosamine + holo-[ACP] + H(+). The protein operates within glycolipid biosynthesis; lipid IV(A) biosynthesis; lipid IV(A) from (3R)-3-hydroxytetradecanoyl-[acyl-carrier-protein] and UDP-N-acetyl-alpha-D-glucosamine: step 3/6. Functionally, catalyzes the N-acylation of UDP-3-O-(hydroxytetradecanoyl)glucosamine using 3-hydroxytetradecanoyl-ACP as the acyl donor. Is involved in the biosynthesis of lipid A, a phosphorylated glycolipid that anchors the lipopolysaccharide to the outer membrane of the cell. This Photorhabdus laumondii subsp. laumondii (strain DSM 15139 / CIP 105565 / TT01) (Photorhabdus luminescens subsp. laumondii) protein is UDP-3-O-(3-hydroxymyristoyl)glucosamine N-acyltransferase.